Here is a 191-residue protein sequence, read N- to C-terminus: Ribosomal RNA small subunit methyltransferase G (191 aa).

S-adenosyl-L-methionine is bound by residues G62, F67, 111-112 (IE), and R124.

Belongs to the methyltransferase superfamily. RNA methyltransferase RsmG family.

Its subcellular location is the cytoplasm. It catalyses the reaction guanosine(527) in 16S rRNA + S-adenosyl-L-methionine = N(7)-methylguanosine(527) in 16S rRNA + S-adenosyl-L-homocysteine. Its function is as follows. Specifically methylates the N7 position of guanine in position 527 of 16S rRNA. This chain is Ribosomal RNA small subunit methyltransferase G, found in Rickettsia prowazekii (strain Madrid E).